Reading from the N-terminus, the 67-residue chain is DNA-directed RNA polymerase subunit omega (67 aa).

The protein belongs to the RNA polymerase subunit omega family. As to quaternary structure, the RNAP catalytic core consists of 2 alpha, 1 beta, 1 beta' and 1 omega subunit. When a sigma factor is associated with the core the holoenzyme is formed, which can initiate transcription.

The enzyme catalyses RNA(n) + a ribonucleoside 5'-triphosphate = RNA(n+1) + diphosphate. Its function is as follows. Promotes RNA polymerase assembly. Latches the N- and C-terminal regions of the beta' subunit thereby facilitating its interaction with the beta and alpha subunits. This is DNA-directed RNA polymerase subunit omega from Legionella pneumophila (strain Paris).